Reading from the N-terminus, the 754-residue chain is 5-methyltetrahydropteroyltriglutamate--homocysteine methyltransferase (754 aa).

5-methyltetrahydropteroyltri-L-glutamate-binding positions include 17-20 and Lys-117; that span reads RELK. Residues 431 to 433 and Glu-484 each bind L-homocysteine; that span reads IGS. L-methionine contacts are provided by residues 431-433 and Glu-484; that span reads IGS. Residues 515–516 and Trp-561 contribute to the 5-methyltetrahydropteroyltri-L-glutamate site; that span reads RC. L-homocysteine is bound at residue Asp-599. Asp-599 serves as a coordination point for L-methionine. Glu-605 provides a ligand contact to 5-methyltetrahydropteroyltri-L-glutamate. The Zn(2+) site is built by His-641, Cys-643, and Glu-665. The active-site Proton donor is His-694. Position 726 (Cys-726) interacts with Zn(2+).

The protein belongs to the vitamin-B12 independent methionine synthase family. The cofactor is Zn(2+).

The catalysed reaction is 5-methyltetrahydropteroyltri-L-glutamate + L-homocysteine = tetrahydropteroyltri-L-glutamate + L-methionine. It participates in amino-acid biosynthesis; L-methionine biosynthesis via de novo pathway; L-methionine from L-homocysteine (MetE route): step 1/1. Its function is as follows. Catalyzes the transfer of a methyl group from 5-methyltetrahydrofolate to homocysteine resulting in methionine formation. The sequence is that of 5-methyltetrahydropteroyltriglutamate--homocysteine methyltransferase from Salmonella dublin (strain CT_02021853).